The primary structure comprises 947 residues: MEEEEVVVVVDEEESERRRQKMIEEEKKRLDEEMELRRRRVKEWQEQKRLEEEEAKRREQEAAAGAGTPAAAAGADGDSNAGKKWTLDGEESDEEGYKEDSQNAEDDGGITADLPSEVNDANVAAPMEEDEIDPLDAFMSSMVLPEVAKLETAVASMESMPASNMGDKNGKSAKDAVSNGDKKGQKKAMGRIMQGDDSDSDYDDDDDDEGGSKDEDDEEFMKRVKKTKVEKLAIVDHSKIEYQPFRKNLYIEVKDITMMTGEEVATYRKNLELKVHGKDVPKPIKTWVQSGLTSKLLDTIKKLGFEKPMPIQAQALPIIMSGRDCIGIAKTGSGKTLAFVLPMLRHVKDQPPVVPGDGPIGLIMAPTRELVVQIHSDIKKFAKSLGINCVAIYGGSGVAQQISELKRGAEIVVCTPGRMIDILCTSSGKITNLRRVTFLVMDEADRMFDMGFEPQITRIVQNTRPDRQTVLFSAIFPRQVEILARKVLTKPVEIQVGGRSVVNKDITQLVEVRPENERFLRLLELLGEWFDRGKILVFVHSQDKCDSLLKDLFQRGYPCLSLHGGKDQTDRESTLADFKSNLELVVNYDVPNHYEDYVHRVGRTGHAGRKGFAVTFISDEEERYAPDLAKALELSEQAVPQDLKGLADRFMAKVKQGTEQAHGTGYGGSGFKFNEEEDEARRSAKKAQAREYGYEEDKSDSDSDEEGGVRKAGGDLAAQAIAAAQAAATLAAAKAASNANQQVQSTNAGSLLSIPVVANAPNNEATARALQAALNIQQNLARIQAHVVPEHYEVELDINDFPQNARWKITHKETLGPIQDWTEAAITTRGTFIPQGKIVGANERKLYLFIEGPTELSVKKAKSELKRVLEDCANHALNLPGSAQTGKTANSEMQGFLVKVFLGRWTAILVFLDDGVICNIRAEKLDKWQVRVFYVKVADPLGYSITE.

The segment covering 1–14 has biased composition (acidic residues); sequence MEEEEVVVVVDEEE. Disordered regions lie at residues 1 to 132 and 159 to 221; these read MEEE…EDEI and SMPA…EEFM. Basic and acidic residues-rich tracts occupy residues 15 to 31 and 42 to 61; these read SERR…KRLD and KEWQ…REQE. Residues 62-82 show a composition bias toward low complexity; sequence AAAGAGTPAAAAGADGDSNAG. 2 stretches are compositionally biased toward acidic residues: residues 88 to 108 and 196 to 219; these read DGEE…EDDG and DDSD…DDEE. Positions 285-313 match the Q motif motif; that stretch reads KTWVQSGLTSKLLDTIKKLGFEKPMPIQA. Positions 316–494 constitute a Helicase ATP-binding domain; it reads LPIIMSGRDC…RKVLTKPVEI (179 aa). 329–336 is a binding site for ATP; the sequence is AKTGSGKT. Positions 442–445 match the DEAD box motif; sequence DEAD. Residues 479 to 647 enclose the Helicase C-terminal domain; that stretch reads QVEILARKVL…AVPQDLKGLA (169 aa). Positions 658–710 are disordered; the sequence is TEQAHGTGYGGSGFKFNEEEDEARRSAKKAQAREYGYEEDKSDSDSDEEGGVR. Acidic residues predominate over residues 697–706; it reads DKSDSDSDEE. A coiled-coil region spans residues 854 to 879; sequence TELSVKKAKSELKRVLEDCANHALNL.

The protein belongs to the DEAD box helicase family. DDX46/PRP5 subfamily.

It catalyses the reaction ATP + H2O = ADP + phosphate + H(+). The chain is DEAD-box ATP-dependent RNA helicase 45 from Oryza sativa subsp. japonica (Rice).